Consider the following 342-residue polypeptide: Heat-inducible transcription repressor HrcA (342 aa).

This sequence belongs to the HrcA family.

In terms of biological role, negative regulator of class I heat shock genes (grpE-dnaK-dnaJ and groELS operons). Prevents heat-shock induction of these operons. This chain is Heat-inducible transcription repressor HrcA, found in Geobacter sulfurreducens (strain ATCC 51573 / DSM 12127 / PCA).